The primary structure comprises 173 residues: DASH complex subunit SPC19 (173 aa).

Belongs to the DASH complex SPC19 family. In terms of assembly, component of the DASH complex consisting of ASK1, DAD1, DAD2, DAD3, DAD4, DAM1, DUO1, HSK3, SPC19 and SPC34, with a stoichiometry of one copy of each subunit per complex. Multiple DASH complexes oligomerize to form a ring that encircles spindle microtubules and organizes the rod-like NDC80 complexes of the outer kinetochore. DASH complex oligomerization strengthens microtubule attachments. On cytoplasmic microtubules, DASH complexes appear to form patches instead of rings.

The protein resides in the nucleus. Its subcellular location is the cytoplasm. It localises to the cytoskeleton. The protein localises to the spindle. It is found in the chromosome. The protein resides in the centromere. Its subcellular location is the kinetochore. Component of the DASH complex that connects microtubules with kinetochores and couples microtubule depolymerisation to chromosome movement; it is involved in retrieving kinetochores to the spindle poles before their re-orientation on the spindle in early mitosis and allows microtubule depolymerization to pull chromosomes apart and resist detachment during anaphase. Kinetochores, consisting of a centromere-associated inner segment and a microtubule-contacting outer segment, play a crucial role in chromosome segregation by mediating the physical connection between centromeric DNA and microtubules. Kinetochores also serve as an input point for the spindle assembly checkpoint, which delays anaphase until all chromosomes have bioriented on the mitotic spindle. This Chaetomium thermophilum (strain DSM 1495 / CBS 144.50 / IMI 039719) (Thermochaetoides thermophila) protein is DASH complex subunit SPC19.